A 483-amino-acid chain; its full sequence is Probable glycosyltransferase 6 (483 aa).

The Cytoplasmic portion of the chain corresponds to 1-40 (MAASETAPFGVSAASKGGGGVAGARAQHGQLAVAGRVHDA). A helical; Signal-anchor for type II membrane protein transmembrane segment spans residues 41-61 (LVFAAGAVAAVLVLLATASFL). The Lumenal segment spans residues 62–483 (SPMPVTNLVA…PLPFDYPAAR (422 aa)). Asn-144 carries an N-linked (GlcNAc...) asparagine glycan.

It belongs to the glycosyltransferase 34 family.

It is found in the golgi apparatus membrane. Probable glycosyltransferase that may be involved in the biosynthesis of xyloglucan. This Oryza sativa subsp. indica (Rice) protein is Probable glycosyltransferase 6.